The chain runs to 930 residues: Protein translocase subunit SecA (930 aa).

Residues Gln-87, 105-109 (GEGKT), and Asp-516 contribute to the ATP site. Residues Cys-914, Cys-916, Cys-925, and His-926 each contribute to the Zn(2+) site.

The protein belongs to the SecA family. Monomer and homodimer. Part of the essential Sec protein translocation apparatus which comprises SecA, SecYEG and auxiliary proteins SecDF-YajC and YidC. Zn(2+) serves as cofactor.

Its subcellular location is the cell inner membrane. It localises to the cytoplasm. It catalyses the reaction ATP + H2O + cellular proteinSide 1 = ADP + phosphate + cellular proteinSide 2.. Its function is as follows. Part of the Sec protein translocase complex. Interacts with the SecYEG preprotein conducting channel. Has a central role in coupling the hydrolysis of ATP to the transfer of proteins into and across the cell membrane, serving both as a receptor for the preprotein-SecB complex and as an ATP-driven molecular motor driving the stepwise translocation of polypeptide chains across the membrane. The sequence is that of Protein translocase subunit SecA from Variovorax paradoxus (strain S110).